Reading from the N-terminus, the 274-residue chain is Diaminopimelate epimerase (274 aa).

Substrate is bound by residues N11, Q44, and N64. The active-site Proton donor is the C73. Residues 74 to 75, N157, N190, and 208 to 209 each bind substrate; these read GN and ER. C217 acts as the Proton acceptor in catalysis. Residue 218 to 219 coordinates substrate; the sequence is GS.

The protein belongs to the diaminopimelate epimerase family. In terms of assembly, homodimer.

The protein localises to the cytoplasm. The catalysed reaction is (2S,6S)-2,6-diaminopimelate = meso-2,6-diaminopimelate. It functions in the pathway amino-acid biosynthesis; L-lysine biosynthesis via DAP pathway; DL-2,6-diaminopimelate from LL-2,6-diaminopimelate: step 1/1. Its function is as follows. Catalyzes the stereoinversion of LL-2,6-diaminopimelate (L,L-DAP) to meso-diaminopimelate (meso-DAP), a precursor of L-lysine and an essential component of the bacterial peptidoglycan. This Glaesserella parasuis serovar 5 (strain SH0165) (Haemophilus parasuis) protein is Diaminopimelate epimerase.